The chain runs to 336 residues: tRNA N6-adenosine threonylcarbamoyltransferase (336 aa).

Residues His-115 and His-119 each contribute to the Fe cation site. Residues 137-141 (LVSGG), Asp-170, Gly-183, Asp-187, and Asn-276 each bind substrate. Asp-302 lines the Fe cation pocket.

The protein belongs to the KAE1 / TsaD family. Fe(2+) is required as a cofactor.

The protein localises to the cytoplasm. The enzyme catalyses L-threonylcarbamoyladenylate + adenosine(37) in tRNA = N(6)-L-threonylcarbamoyladenosine(37) in tRNA + AMP + H(+). Functionally, required for the formation of a threonylcarbamoyl group on adenosine at position 37 (t(6)A37) in tRNAs that read codons beginning with adenine. Is involved in the transfer of the threonylcarbamoyl moiety of threonylcarbamoyl-AMP (TC-AMP) to the N6 group of A37, together with TsaE and TsaB. TsaD likely plays a direct catalytic role in this reaction. This is tRNA N6-adenosine threonylcarbamoyltransferase from Streptococcus suis (strain 98HAH33).